We begin with the raw amino-acid sequence, 225 residues long: NAD(P)H-quinone oxidoreductase subunit K, chloroplastic (225 aa).

[4Fe-4S] cluster contacts are provided by Cys43, Cys44, Cys108, and Cys139.

Belongs to the complex I 20 kDa subunit family. NDH is composed of at least 16 different subunits, 5 of which are encoded in the nucleus. [4Fe-4S] cluster serves as cofactor.

The protein resides in the plastid. It localises to the chloroplast thylakoid membrane. The catalysed reaction is a plastoquinone + NADH + (n+1) H(+)(in) = a plastoquinol + NAD(+) + n H(+)(out). It catalyses the reaction a plastoquinone + NADPH + (n+1) H(+)(in) = a plastoquinol + NADP(+) + n H(+)(out). NDH shuttles electrons from NAD(P)H:plastoquinone, via FMN and iron-sulfur (Fe-S) centers, to quinones in the photosynthetic chain and possibly in a chloroplast respiratory chain. The immediate electron acceptor for the enzyme in this species is believed to be plastoquinone. Couples the redox reaction to proton translocation, and thus conserves the redox energy in a proton gradient. The chain is NAD(P)H-quinone oxidoreductase subunit K, chloroplastic from Atropa belladonna (Belladonna).